The sequence spans 137 residues: Small ribosomal subunit protein uS8 (137 aa).

Belongs to the universal ribosomal protein uS8 family. Part of the 30S ribosomal subunit. Contacts proteins S5 and S12.

Its function is as follows. One of the primary rRNA binding proteins, it binds directly to 16S rRNA central domain where it helps coordinate assembly of the platform of the 30S subunit. This Metamycoplasma arthritidis (strain 158L3-1) (Mycoplasma arthritidis) protein is Small ribosomal subunit protein uS8.